An 87-amino-acid polypeptide reads, in one-letter code: Acyl-CoA-binding protein (87 aa).

One can recognise an ACB domain in the interval 3–87; that stretch reads LKEEFEEHAV…KVKQLLEESA (85 aa). Residues 30 to 34, lysine 56, and tyrosine 75 each bind an acyl-CoA; that span reads YGLYK.

This sequence belongs to the ACBP family.

Binds medium- and long-chain acyl-CoA esters with very high affinity and may function as an intracellular carrier of acyl-CoA esters. The chain is Acyl-CoA-binding protein (ACABP) from Fritillaria agrestis (Stinkbells).